The chain runs to 485 residues: Alginate biosynthesis protein AlgA (485 aa).

Belongs to the mannose-6-phosphate isomerase type 2 family. Monomer. Co(2+) serves as cofactor.

The enzyme catalyses D-mannose 6-phosphate = D-fructose 6-phosphate. It catalyses the reaction alpha-D-mannose 1-phosphate + GTP + H(+) = GDP-alpha-D-mannose + diphosphate. It functions in the pathway nucleotide-sugar biosynthesis; GDP-alpha-D-mannose biosynthesis; GDP-alpha-D-mannose from alpha-D-mannose 1-phosphate (GTP route): step 1/1. Its pathway is nucleotide-sugar biosynthesis; GDP-alpha-D-mannose biosynthesis; alpha-D-mannose 1-phosphate from D-fructose 6-phosphate: step 1/2. In terms of biological role, produces a precursor for alginate polymerization. The alginate layer provides a protective barrier against host immune defenses and antibiotics. In Pseudomonas putida (strain ATCC 47054 / DSM 6125 / CFBP 8728 / NCIMB 11950 / KT2440), this protein is Alginate biosynthesis protein AlgA (algA).